The sequence spans 231 residues: Large ribosomal subunit protein uL1 (231 aa).

Belongs to the universal ribosomal protein uL1 family. As to quaternary structure, part of the 50S ribosomal subunit.

Binds directly to 23S rRNA. The L1 stalk is quite mobile in the ribosome, and is involved in E site tRNA release. In terms of biological role, protein L1 is also a translational repressor protein, it controls the translation of the L11 operon by binding to its mRNA. In Methylocella silvestris (strain DSM 15510 / CIP 108128 / LMG 27833 / NCIMB 13906 / BL2), this protein is Large ribosomal subunit protein uL1.